Reading from the N-terminus, the 450-residue chain is UDP-N-acetylmuramoylalanine--D-glutamate ligase (450 aa).

119 to 125 lines the ATP pocket; that stretch reads GSNGKTT.

It belongs to the MurCDEF family.

Its subcellular location is the cytoplasm. It carries out the reaction UDP-N-acetyl-alpha-D-muramoyl-L-alanine + D-glutamate + ATP = UDP-N-acetyl-alpha-D-muramoyl-L-alanyl-D-glutamate + ADP + phosphate + H(+). Its pathway is cell wall biogenesis; peptidoglycan biosynthesis. Cell wall formation. Catalyzes the addition of glutamate to the nucleotide precursor UDP-N-acetylmuramoyl-L-alanine (UMA). The protein is UDP-N-acetylmuramoylalanine--D-glutamate ligase of Streptococcus pneumoniae serotype 4 (strain ATCC BAA-334 / TIGR4).